The sequence spans 230 residues: RING finger protein 141 (230 aa).

Gly-2 carries the N-myristoyl glycine lipid modification. Residues 155–192 (CCICMDGRADLILPCAHSFCQKCIDKWSDRHRNCPICR) form an RING-type zinc finger.

As to expression, isoform 1 is testis-specific. Isoform 2 is expressed in heart, brain, skeletal muscle, kidney, pancreas, lung, liver and testis. Isoform 3 is expressed in heart, liver, and kidney.

The protein localises to the membrane. Functionally, may be involved in spermatogenesis. The protein is RING finger protein 141 (Rnf141) of Mus musculus (Mouse).